The sequence spans 443 residues: Differentially expressed in FDCP 8 homolog A (443 aa).

Residues 1-49 form a disordered region; the sequence is MEYDDKLVRFRQGHLNPFDKQGGAERHPADSEAQPPKDSSTISPHSIPE. 2 Phorbol-ester/DAG-type zinc fingers span residues 134 to 185 and 364 to 424; these read EHRF…TKPC and IHTT…STSC.

It belongs to the DEF8 family.

Its function is as follows. Positively regulates lysosome peripheral distribution and ruffled border formation in osteoclasts. Involved in bone resorption. This is Differentially expressed in FDCP 8 homolog A (def8-a) from Xenopus laevis (African clawed frog).